The primary structure comprises 608 residues: Elongation factor 4 (608 aa).

Residues 11–193 (SKIRNFSIIA…QIVEKVPAPD (183 aa)) enclose the tr-type G domain. GTP contacts are provided by residues 23 to 28 (DHGKST) and 140 to 143 (NKID).

This sequence belongs to the TRAFAC class translation factor GTPase superfamily. Classic translation factor GTPase family. LepA subfamily.

The protein resides in the cell membrane. The enzyme catalyses GTP + H2O = GDP + phosphate + H(+). Required for accurate and efficient protein synthesis under certain stress conditions. May act as a fidelity factor of the translation reaction, by catalyzing a one-codon backward translocation of tRNAs on improperly translocated ribosomes. Back-translocation proceeds from a post-translocation (POST) complex to a pre-translocation (PRE) complex, thus giving elongation factor G a second chance to translocate the tRNAs correctly. Binds to ribosomes in a GTP-dependent manner. This is Elongation factor 4 from Bacillus cytotoxicus (strain DSM 22905 / CIP 110041 / 391-98 / NVH 391-98).